A 214-amino-acid chain; its full sequence is Orotate phosphoribosyltransferase (214 aa).

K26 is a binding site for 5-phospho-alpha-D-ribose 1-diphosphate. 34–35 serves as a coordination point for orotate; that stretch reads FF. 5-phospho-alpha-D-ribose 1-diphosphate-binding positions include 72-73, R98, K99, K102, H104, and 123-131; these read YK and DDVISAGTS. Orotate is bound by residues S127 and R155.

This sequence belongs to the purine/pyrimidine phosphoribosyltransferase family. PyrE subfamily. Homodimer. It depends on Mg(2+) as a cofactor.

It carries out the reaction orotidine 5'-phosphate + diphosphate = orotate + 5-phospho-alpha-D-ribose 1-diphosphate. It functions in the pathway pyrimidine metabolism; UMP biosynthesis via de novo pathway; UMP from orotate: step 1/2. Catalyzes the transfer of a ribosyl phosphate group from 5-phosphoribose 1-diphosphate to orotate, leading to the formation of orotidine monophosphate (OMP). This is Orotate phosphoribosyltransferase from Chromobacterium violaceum (strain ATCC 12472 / DSM 30191 / JCM 1249 / CCUG 213 / NBRC 12614 / NCIMB 9131 / NCTC 9757 / MK).